The following is a 439-amino-acid chain: Type 3 secretion system ATPase (439 aa).

172–177 (GGGKST) serves as a coordination point for ATP.

This sequence belongs to the ATPase alpha/beta chains family. T3SS ATPase subfamily. In terms of assembly, the core secretion machinery of the T3SS is composed of approximately 20 different proteins, including cytoplasmic components, a base, an export apparatus and a needle. This subunit is part of the cytosolic complex. Forms homohexamers.

The protein localises to the cytoplasm. It carries out the reaction ATP + H2O + cellular proteinSide 1 = ADP + phosphate + cellular proteinSide 2.. Functionally, ATPase component of the type III secretion system (T3SS), also called injectisome, which is used to inject bacterial effector proteins into eukaryotic host cells. Acts as a molecular motor to provide the energy that is required for the export of proteins. Required for type III secretion apparatus (T3SA) formation, proper protein secretion, host cell invasion and virulence. May play a critical role in T3SS substrate recognition, disassembly of the effector/chaperone complex and unfolding of the effector in an ATP-dependent manner prior to secretion. In Yersinia pseudotuberculosis serotype I (strain IP32953), this protein is Type 3 secretion system ATPase.